A 214-amino-acid chain; its full sequence is Phosphatidylserine decarboxylase proenzyme (214 aa).

S183 (schiff-base intermediate with substrate; via pyruvic acid) is an active-site residue. At S183 the chain carries Pyruvic acid (Ser); by autocatalysis.

It belongs to the phosphatidylserine decarboxylase family. PSD-A subfamily. As to quaternary structure, heterodimer of a large membrane-associated beta subunit and a small pyruvoyl-containing alpha subunit. Pyruvate is required as a cofactor. In terms of processing, is synthesized initially as an inactive proenzyme. Formation of the active enzyme involves a self-maturation process in which the active site pyruvoyl group is generated from an internal serine residue via an autocatalytic post-translational modification. Two non-identical subunits are generated from the proenzyme in this reaction, and the pyruvate is formed at the N-terminus of the alpha chain, which is derived from the carboxyl end of the proenzyme. The post-translation cleavage follows an unusual pathway, termed non-hydrolytic serinolysis, in which the side chain hydroxyl group of the serine supplies its oxygen atom to form the C-terminus of the beta chain, while the remainder of the serine residue undergoes an oxidative deamination to produce ammonia and the pyruvoyl prosthetic group on the alpha chain.

Its subcellular location is the cell membrane. It catalyses the reaction a 1,2-diacyl-sn-glycero-3-phospho-L-serine + H(+) = a 1,2-diacyl-sn-glycero-3-phosphoethanolamine + CO2. The protein operates within phospholipid metabolism; phosphatidylethanolamine biosynthesis; phosphatidylethanolamine from CDP-diacylglycerol: step 2/2. Functionally, catalyzes the formation of phosphatidylethanolamine (PtdEtn) from phosphatidylserine (PtdSer). This is Phosphatidylserine decarboxylase proenzyme from Chlorobaculum parvum (strain DSM 263 / NCIMB 8327) (Chlorobium vibrioforme subsp. thiosulfatophilum).